The chain runs to 863 residues: Potassium/sodium hyperpolarization-activated cyclic nucleotide-gated channel 2 (863 aa).

Residues 1–10 (MDARGGGGRP) are compositionally biased toward gly residues. A disordered region spans residues 1–131 (MDARGGGGRP…AGPAGEPRGS (131 aa)). The Cytoplasmic portion of the chain corresponds to 1 to 188 (MDARGGGGRP…PYSDFRFYWD (188 aa)). The segment covering 17–47 (TPAPGPPPPPPPPAPPQPQPPPAPPPNPTTP) has biased composition (pro residues). The segment covering 106–128 (GAASGPAAAEEAGSEEAGPAGEP) has biased composition (low complexity). S119 and S134 each carry phosphoserine. Residues 131–182 (SQASFLQRQFGALLQPGVNKFSLRMFGSQKAVEREQERVKSAGAWIIHPYSD) are involved in subunit assembly. Residues 189-209 (FTMLLFMVGNLIIIPVGITFF) form a helical membrane-spanning segment. Topologically, residues 210–213 (KDET) are extracellular. Residues 214–234 (TAPWIVFNVVSDTFFLMDLVL) form a helical membrane-spanning segment. The Cytoplasmic segment spans residues 235–261 (NFRTGIVIEDNTEIILDPEKIKKKYLR). Residues 262–282 (TWFVVDFVSSIPVDYIFLIVE) traverse the membrane as a helical segment. Topologically, residues 283–290 (KGIDSEVY) are extracellular. A helical; Voltage-sensor transmembrane segment spans residues 291–311 (KTARALRIVRFTKILSLLRLL). Topologically, residues 312-342 (RLSRLIRYIHQWEEIFHMTYDLASAVMRICN) are cytoplasmic. The chain crosses the membrane as a helical span at residues 343 to 363 (LISMMLLLCHWDGCLQFLVPM). Over 364–386 (LQDFPSDCWVSINNMVNHSWSEL) the chain is Extracellular. N380 carries an N-linked (GlcNAc...) asparagine glycan. Positions 387 to 408 (YSFALFKAMSHMLCIGYGRQAP) form an intramembrane region, pore-forming. Residues 409-413 (ESMTD) lie on the Extracellular side of the membrane. Residues 414–434 (IWLTMLSMIVGATCYAMFIGH) form a helical membrane-spanning segment. Over 435–863 (ATALIQSLDS…SARSRLSSNL (429 aa)) the chain is Cytoplasmic. Residues G581, E582, C584, R591, T592, and R632 each coordinate 3',5'-cyclic AMP. S641 bears the Phosphoserine; by PKG/PRKG2 mark. S726 is subject to Phosphoserine. The residue at position 728 (R728) is an Omega-N-methylarginine. The segment at 730 to 863 (VRRAPPGPLP…SARSRLSSNL (134 aa)) is disordered. Positions 734-755 (PPGPLPPAASPGPPAASPPAAP) are enriched in pro residues. Residues S743, S750, and S757 each carry the phosphoserine modification. Low complexity-rich tracts occupy residues 756-765 (SSPRAPRTSP) and 778-834 (PALP…AAPS). Phosphoserine is present on residues S840, S842, and S847.

This sequence belongs to the potassium channel HCN family. In terms of assembly, homotetramer. The channel is composed of a homo- or heterotetrameric complex of pore-forming subunits. Heterotetramer with HCN1. Forms an obligate 4:4 complex with accessory subunit PEX5L. Interacts with KCNE2. Phosphorylation at Ser-641 by PRKG2 shifts the voltage-dependence to more negative voltages, hence counteracting the stimulatory effect of cGMP on gating. In terms of processing, N-glycosylated; required for cell surface trafficking of HCN2. Post-translationally, S-palmitoylated. In terms of tissue distribution, highly expressed in neonatal and adult ventricle and in brain. Highly expressed in the pyramidal layer in hippocampus, in anterior dorsal nucleus in thalamus, in the mammillary nucleus in hypothalamus, in red nucleus, in trigeminal mesencephalic, spinal and principal nuclei, in cochlear and trapezoid nuclei and in the dorsal tegemental nucleus.

The protein resides in the cell membrane. It carries out the reaction Na(+)(in) = Na(+)(out). It catalyses the reaction K(+)(in) = K(+)(out). The catalysed reaction is NH4(+)(in) = NH4(+)(out). Its activity is regulated as follows. Activated by cAMP, and at 10-100 times higher concentrations, also by cGMP. cAMP binding causes a conformation change that leads to the assembly of an active tetramer and channel opening. In the absence of cAMP, the C-terminal region is thought to exert a tonic inhibition on the pore when HCN2 is in a non-tetrameric form. Channel activity is modulated by intracellular chloride ions and pH; acidic pH shifts the activation to more negative voltages. Phosphatidylinositol-4,5- bisphosphate (PIP(2)) acts as a ligand that allosterically opens HCN2 by shifting voltage-dependent channel activation toward depolarized potentials. Inhibited by extracellular cesium ions. Its function is as follows. Hyperpolarization-activated ion channel exhibiting weak selectivity for potassium over sodium ions. Contributes to the native pacemaker currents in heart (If) and in neurons (Ih). Can also transport ammonium in the distal nephron. Involved in the initiation of neuropathic pain in sensory neurons. Produces a large instantaneous current. The sequence is that of Potassium/sodium hyperpolarization-activated cyclic nucleotide-gated channel 2 (Hcn2) from Rattus norvegicus (Rat).